Reading from the N-terminus, the 268-residue chain is Zinc transporter ZupT (268 aa).

Helical transmembrane passes span 6–26 (IIFAFSLTLFAGLATGVGGVI), 37–57 (FLAGSLGFSVGVMLFVSFVEI), 73–93 (GGNWAATGAFFAGIALIAVID), 126–146 (VLTAIAISIHNFPEGFATFVA), 153–173 (IAIPVAVAIAIHNIPEGIAVA), 189–209 (WATLSGLAEPAGAVVGFILLM), 211–231 (FLGPEAMGLSFAAVAGIMVFI), and 248–268 (TAIYGLVGGMAVMAVSLLLFI). 2 residues coordinate Fe(2+): Asn-136 and Glu-139. Residues Glu-139 and His-164 each contribute to the Zn(2+) site. Fe(2+) contacts are provided by Asn-165, Glu-168, and Glu-197. A Zn(2+)-binding site is contributed by Glu-168.

This sequence belongs to the ZIP transporter (TC 2.A.5) family. ZupT subfamily.

Its subcellular location is the cell membrane. The catalysed reaction is Zn(2+)(in) = Zn(2+)(out). Functionally, mediates zinc uptake. May also transport other divalent cations. This Corynebacterium efficiens (strain DSM 44549 / YS-314 / AJ 12310 / JCM 11189 / NBRC 100395) protein is Zinc transporter ZupT.